The chain runs to 193 residues: Potassium-transporting ATPase KdpC subunit (193 aa).

The chain crosses the membrane as a helical span at residues 7-27 (PLVVIFAVLTVVTGMAYPAVM).

The protein belongs to the KdpC family. The system is composed of three essential subunits: KdpA, KdpB and KdpC.

Its subcellular location is the cell inner membrane. Part of the high-affinity ATP-driven potassium transport (or Kdp) system, which catalyzes the hydrolysis of ATP coupled with the electrogenic transport of potassium into the cytoplasm. This subunit acts as a catalytic chaperone that increases the ATP-binding affinity of the ATP-hydrolyzing subunit KdpB by the formation of a transient KdpB/KdpC/ATP ternary complex. This chain is Potassium-transporting ATPase KdpC subunit, found in Burkholderia vietnamiensis (strain G4 / LMG 22486) (Burkholderia cepacia (strain R1808)).